Reading from the N-terminus, the 274-residue chain is 5'-3' exoribonuclease (274 aa).

His8, His10, Asp15, His40, Glu65, His76, His190, Asp247, and His249 together coordinate Mn(2+).

It belongs to the PHP family. TrpH/YciV subfamily. Requires Mn(2+) as cofactor.

The enzyme catalyses a ribonucleoside 3',5'-bisphosphate + H2O = a ribonucleoside 5'-phosphate + phosphate. In terms of biological role, efficiently catalyzes the hydrolysis of the 3'-phosphate from 3',5'-bis-phosphonucleotides as well as the successive hydrolysis of 5'-phosphomononucleotides from the 5'-end of short pieces of RNA and DNA, with no specificity toward the identity of the nucleotide base. Is more efficient at hydrolyzing RNA oligonucleotides than DNA oligonucleotides. This enzyme can also hydrolyze annealed DNA duplexes, albeit at a catalytic efficiency lower than that of the corresponding single-stranded oligonucleotides. The sequence is that of 5'-3' exoribonuclease from Haemophilus influenzae (strain ATCC 51907 / DSM 11121 / KW20 / Rd).